Reading from the N-terminus, the 333-residue chain is MESSGNPESTTFFYYDLQSQPCENQAWVFATLATTVLYCLVFLLSLVGNSLVLWVLVKYESLESLTNIFILNLCLSDLVFACLLPVWISPYHWGWVLGDFLCKLLNMIFSISLYSSIFFLTIMTIHRYLSVVSPLSTLRVPTLRCRVLVTMAVWVASILSSILDTIFHKVLSSGCDYSELTWYLTSVYQHNLFFLLSLGIILFCYVEILRTLFRSRSKRRHRTVKLIFAIVVAYFLSWGPYNFTLFLQTLFRTQIIRSCEAKQQLEYALLICRNLAFSHCCFNPVLYVFVGVKFRTHLKHVLRQFWFCRLQAPSPASIPHSPGAFAYEGASFY.

Over 1 to 31 (MESSGNPESTTFFYYDLQSQPCENQAWVFAT) the chain is Extracellular. A helical transmembrane segment spans residues 32 to 59 (LATTVLYCLVFLLSLVGNSLVLWVLVKY). Over 60 to 69 (ESLESLTNIF) the chain is Cytoplasmic. Residues 70–89 (ILNLCLSDLVFACLLPVWIS) traverse the membrane as a helical segment. Over 90–103 (PYHWGWVLGDFLCK) the chain is Extracellular. Cys102 and Cys175 are disulfide-bonded. A helical membrane pass occupies residues 104–125 (LLNMIFSISLYSSIFFLTIMTI). Topologically, residues 126-142 (HRYLSVVSPLSTLRVPT) are cytoplasmic. Residues 143 to 167 (LRCRVLVTMAVWVASILSSILDTIF) traverse the membrane as a helical segment. Residues 168–190 (HKVLSSGCDYSELTWYLTSVYQH) are Extracellular-facing. Residues 191 to 209 (NLFFLLSLGIILFCYVEIL) form a helical membrane-spanning segment. The Cytoplasmic portion of the chain corresponds to 210–225 (RTLFRSRSKRRHRTVK). A helical membrane pass occupies residues 226-250 (LIFAIVVAYFLSWGPYNFTLFLQTL). At 251–267 (FRTQIIRSCEAKQQLEY) the chain is on the extracellular side. Residues 268-291 (ALLICRNLAFSHCCFNPVLYVFVG) traverse the membrane as a helical segment. Residues 292–333 (VKFRTHLKHVLRQFWFCRLQAPSPASIPHSPGAFAYEGASFY) are Cytoplasmic-facing.

It belongs to the G-protein coupled receptor 1 family.

The protein localises to the cell membrane. In terms of biological role, receptor for chemokines SCYC1 and SCYC2. Subsequently transduces a signal by increasing the intracellular calcium ions level. Receptor for XCL1/Lymphotactin. This is Chemokine XC receptor 1 (XCR1) from Homo sapiens (Human).